The sequence spans 445 residues: Alpha-1,3-mannosyl-glycoprotein 2-beta-N-acetylglucosaminyltransferase (445 aa).

Residues 1 to 6 are Cytoplasmic-facing; it reads MLKKQS. Residues 7–29 form a helical; Signal-anchor for type II membrane protein membrane-spanning segment; that stretch reads AGLVLWGAILFVAWNALLLLFFW. Topologically, residues 30–445 are lumenal; that stretch reads TRPAPGRPPS…TWEGYDPSWN (416 aa). Cys-113 and Cys-143 are joined by a disulfide. Arg-115, Asp-142, His-188, and Asp-210 together coordinate substrate. Residue Asp-211 participates in Mn(2+) binding. An intrachain disulfide couples Cys-237 to Cys-303. Asp-289 acts as the Proton acceptor in catalysis. Ser-320 contacts substrate.

The protein belongs to the glycosyltransferase 13 family. Interacts with MGAT4D. Interacts with BRI3 (isoforms 1 and 2); the interaction with isoform 2 is weaker than with isoform 1. It depends on Mn(2+) as a cofactor.

It localises to the golgi apparatus membrane. The protein resides in the cytoplasm. It is found in the perinuclear region. The catalysed reaction is N(4)-(alpha-D-Man-(1-&gt;3)-[alpha-D-Man-(1-&gt;3)-[alpha-D-Man-(1-&gt;6)]-alpha-D-Man-(1-&gt;6)]-beta-D-Man-(1-&gt;4)-beta-D-GlcNAc-(1-&gt;4)-beta-D-GlcNAc)-L-asparaginyl-[protein] (N-glucan mannose isomer 5A1,2) + UDP-N-acetyl-alpha-D-glucosamine = N(4)-{beta-D-GlcNAc-(1-&gt;2)-alpha-D-Man-(1-&gt;3)-[alpha-D-Man-(1-&gt;3)-[alpha-D-Man-(1-&gt;6)]-alpha-D-Man-(1-&gt;6)]-beta-D-Man-(1-&gt;4)-beta-D-GlcNAc-(1-&gt;4)-beta-D-GlcNAc}-L-asparaginyl-[protein] + UDP + H(+). It participates in protein modification; protein glycosylation. Functionally, initiates complex N-linked carbohydrate formation. Essential for the conversion of high-mannose to hybrid and complex N-glycans. The protein is Alpha-1,3-mannosyl-glycoprotein 2-beta-N-acetylglucosaminyltransferase (MGAT1) of Homo sapiens (Human).